The sequence spans 365 residues: Glycerol dehydrogenase (365 aa).

Aspartate 37, glycine 94, lysine 95, threonine 116, and serine 119 together coordinate NAD(+). A glycerol-binding site is contributed by aspartate 121. NAD(+) is bound by residues serine 125, leucine 127, and tyrosine 131. Residues aspartate 171, histidine 254, and histidine 271 each contribute to the Zn(2+) site. A glycerol-binding site is contributed by histidine 254.

It belongs to the iron-containing alcohol dehydrogenase family. Zn(2+) is required as a cofactor.

It catalyses the reaction glycerol + NAD(+) = dihydroxyacetone + NADH + H(+). It participates in polyol metabolism; glycerol fermentation; glycerone phosphate from glycerol (oxidative route): step 1/2. Catalyzes the NAD-dependent oxidation of glycerol to dihydroxyacetone (glycerone). Allows microorganisms to utilize glycerol as a source of carbon under anaerobic conditions. The polypeptide is Glycerol dehydrogenase (gldA) (Pseudomonas putida (Arthrobacter siderocapsulatus)).